Consider the following 113-residue polypeptide: ATP-dependent Clp protease adapter protein ClpS (113 aa).

It belongs to the ClpS family. In terms of assembly, binds to the N-terminal domain of the chaperone ClpA.

Functionally, involved in the modulation of the specificity of the ClpAP-mediated ATP-dependent protein degradation. This Leptospira biflexa serovar Patoc (strain Patoc 1 / Ames) protein is ATP-dependent Clp protease adapter protein ClpS.